The sequence spans 103 residues: Large ribosomal subunit protein bL21 (103 aa).

The protein belongs to the bacterial ribosomal protein bL21 family. Part of the 50S ribosomal subunit. Contacts protein L20.

In terms of biological role, this protein binds to 23S rRNA in the presence of protein L20. This chain is Large ribosomal subunit protein bL21, found in Azotobacter vinelandii (strain DJ / ATCC BAA-1303).